We begin with the raw amino-acid sequence, 218 residues long: Adenylate kinase (218 aa).

ATP is bound at residue 10-15; the sequence is GAGKGT. Residues 30-59 are NMP; it reads STGDMLRAAVKAGTPLGQQAKAVMDAGKLV. AMP contacts are provided by residues T31, R36, 57–59, 85–88, and Q92; these read KLV and GFPR. The tract at residues 122–159 is LID; that stretch reads GRRSHPASGRTYHVKFNPPKVEGKDDVTGEDLIQREDD. Residues R123 and 132–133 contribute to the ATP site; that span reads TY. Residues 127–147 form a disordered region; it reads PASGRTYHVKFNPPKVEGKDD. R156 and R167 together coordinate AMP. G203 lines the ATP pocket.

Belongs to the adenylate kinase family. Monomer.

Its subcellular location is the cytoplasm. The catalysed reaction is AMP + ATP = 2 ADP. It functions in the pathway purine metabolism; AMP biosynthesis via salvage pathway; AMP from ADP: step 1/1. In terms of biological role, catalyzes the reversible transfer of the terminal phosphate group between ATP and AMP. Plays an important role in cellular energy homeostasis and in adenine nucleotide metabolism. The chain is Adenylate kinase from Paracidovorax citrulli (strain AAC00-1) (Acidovorax citrulli).